The primary structure comprises 261 residues: Methyltransferase nsrG (261 aa).

The tract at residues 49–141 is methyltransferase domain; the sequence is DVGAGNGPYA…AHQLRPGALF (93 aa).

The protein belongs to the methyltransferase superfamily.

It participates in secondary metabolite biosynthesis. Its function is as follows. Methyltransferase; part of the gene cluster that mediates the biosynthesis of the tetrahydroxanthone dimer neosartorin, which exhibits antibacterial activity. The two different monomeric units appear to be synthesized by the same set of enzymes, among which the Baeyer-Villiger monooxygenase nsrF is the key enzyme for the divergence of the biosynthetic routes. The pathway begins with the synthesis of atrochrysone thioester by the polyketide synthase nsrB. The atrochrysone carboxyl ACP thioesterase nsrC then breaks the thioester bond and releases the atrochrysone carboxylic acid from AacuL. Atrochrysone carboxylic acid is decarboxylated by the decarboxylase nsrE, and oxidized by the anthrone oxygenase nsrD to yield emodin. Emodin is then reduced to emodin hydroquinone by the oxidoreductase nsrR. A-ring reduction by the short chain dehydrogenase nsrJ, dehydration by the scytalone dehydratase-like protein nsrI and probable spontaneous re-oxidation, results in overall deoxygenation to chrysophanol. The Baeyer-Villiger monooxygenase nsrF accepts chrysophanol as a substrate to insert one oxygen atom at two different positions to yield the precursors of both monomric units. NsrF is promiscuous/flexible in interacting with the 2 (non methylated and methylated) aromatic rings of chrysophanol, thus diverging the biosynthetic pathway at this point. After the hydrolysis of the lactones, methylesterification by the methyltransferase nsrG yields respectively moniliphenone and 2,2',6'-trihydroxy-4-methyl-6-methoxya-cyldiphenylmethanone. The next steps are the hydroxylation by the FAD-dependent monooxygenase nsrK, followed by isomerization by the monooxygenase nsrQ. The short chain dehydrogenase/reductase nsrO then catalyzes the C-5 ketoreduction to give the xanthone skeleton of blennolide C and 5-acetylblennolide A. The acetyltransferase nsrL has a strict substrate specificity and uses only blennolide A but not blennolide C to yield 5-acetylblennolide A as the single-acetylated product. In the final step of the biosynthesis, the heterodimerization of the 2 xanthones, blennolide C and 5-acetylblennolide A, is catalyzed by the cytochrome P450 monooxygenase nsrP. NsrP can utilize at least three different xanthones as its substrates to perform the dimerization reaction. In Aspergillus novofumigatus (strain IBT 16806), this protein is Methyltransferase nsrG.